The primary structure comprises 141 residues: Large ribosomal subunit protein uL11 (141 aa).

The protein belongs to the universal ribosomal protein uL11 family. In terms of assembly, part of the ribosomal stalk of the 50S ribosomal subunit. Interacts with L10 and the large rRNA to form the base of the stalk. L10 forms an elongated spine to which L12 dimers bind in a sequential fashion forming a multimeric L10(L12)X complex. Post-translationally, one or more lysine residues are methylated.

Functionally, forms part of the ribosomal stalk which helps the ribosome interact with GTP-bound translation factors. The chain is Large ribosomal subunit protein uL11 from Acaryochloris marina (strain MBIC 11017).